A 477-amino-acid polypeptide reads, in one-letter code: MTKKLYIKTWGCQMNEYDSEKMADLLDSTHGFSAAQSAEEADVILLNTCSIREKAQEKVFHQLGRWKTLKQDKPELIIGVGGCVASQEGDTIRQRAPFVDLVFGPQTLHRLPEMINELKGGAKSVIDVSFPEIEKFDRLPEPRAEGPTAFVSIMEGCSKYCTFCVVPYTRGEEVSRPVDDVLLEIAQLAGQGVREVNLLGQNVNAYRGENYDGTICRFSELLELVAAIDGIDRIRYTTSHPVEFTDDIIDAYASIPELVDHLHLPVQSGSDRILNLMKRGHTALEYKSKMRKLKKIRPNISLSSDFIIGFPGETDADFEATMDLIQAVDYDLSFSFIYSARPGTPAADAVDDVTEETKKQRLHLLQQRITQQALRIARHMVGTEQRILVEGPSKKNPMELSGRTENNRVVNFEGTPDMIGEFVDVNITDVFTNSLRGEVVRRESEMGLRVAVSPQSIMAKHQADMPDELGVGQFSPA.

Residues lysine 3–glycine 120 enclose the MTTase N-terminal domain. [4Fe-4S] cluster is bound by residues cysteine 12, cysteine 49, cysteine 83, cysteine 157, cysteine 161, and cysteine 164. The 233-residue stretch at arginine 143–arginine 375 folds into the Radical SAM core domain. The TRAM domain occupies arginine 378 to arginine 441.

It belongs to the methylthiotransferase family. MiaB subfamily. As to quaternary structure, monomer. It depends on [4Fe-4S] cluster as a cofactor.

The protein resides in the cytoplasm. The catalysed reaction is N(6)-dimethylallyladenosine(37) in tRNA + (sulfur carrier)-SH + AH2 + 2 S-adenosyl-L-methionine = 2-methylsulfanyl-N(6)-dimethylallyladenosine(37) in tRNA + (sulfur carrier)-H + 5'-deoxyadenosine + L-methionine + A + S-adenosyl-L-homocysteine + 2 H(+). In terms of biological role, catalyzes the methylthiolation of N6-(dimethylallyl)adenosine (i(6)A), leading to the formation of 2-methylthio-N6-(dimethylallyl)adenosine (ms(2)i(6)A) at position 37 in tRNAs that read codons beginning with uridine. The polypeptide is tRNA-2-methylthio-N(6)-dimethylallyladenosine synthase (Alteromonas mediterranea (strain DSM 17117 / CIP 110805 / LMG 28347 / Deep ecotype)).